The chain runs to 89 residues: Small ribosomal subunit protein uS14 (89 aa).

The protein belongs to the universal ribosomal protein uS14 family. As to quaternary structure, part of the 30S ribosomal subunit. Contacts proteins S3 and S10.

In terms of biological role, binds 16S rRNA, required for the assembly of 30S particles and may also be responsible for determining the conformation of the 16S rRNA at the A site. The chain is Small ribosomal subunit protein uS14 from Leuconostoc mesenteroides subsp. mesenteroides (strain ATCC 8293 / DSM 20343 / BCRC 11652 / CCM 1803 / JCM 6124 / NCDO 523 / NBRC 100496 / NCIMB 8023 / NCTC 12954 / NRRL B-1118 / 37Y).